The sequence spans 505 residues: DEAD-box ATP-dependent RNA helicase 41 (505 aa).

The HIT-type zinc finger occupies 27 to 56 (GEPKCVICSRYGEYICDETNDDVCSLECKQ). The Q motif motif lies at 110–138 (LTFTSCGLPPKLLLNLETAGYDFPTPIQM). One can recognise a Helicase ATP-binding domain in the interval 141-318 (IPAALTGKSL…GSLAKEIILV (178 aa)). An ATP-binding site is contributed by 154-161 (ADTGSGKT). The short motif at 267–270 (DEVD) is the DEAD box element. One can recognise a Helicase C-terminal domain in the interval 342–492 (KKQKLFDILR…AIPKELINLT (151 aa)).

It belongs to the DEAD box helicase family. DDX59 subfamily.

It catalyses the reaction ATP + H2O = ADP + phosphate + H(+). The protein is DEAD-box ATP-dependent RNA helicase 41 (RH41) of Arabidopsis thaliana (Mouse-ear cress).